A 362-amino-acid polypeptide reads, in one-letter code: Chromobox protein homolog 8 (362 aa).

The 59-residue stretch at 11–69 (FAAEALLKRRIRKGRMEYLVKWKGWSQKYSTWEPEENILDARLLAAFEEREREMELYGP) folds into the Chromo domain. The span at 90–100 (KTYEFRSDSTR) shows a compositional bias: basic and acidic residues. Residues 90 to 197 (KTYEFRSDST…LGEPSAGLGE (108 aa)) form a disordered region. Residue Ser110 is modified to Phosphoserine. Basic and acidic residues predominate over residues 142–162 (DPPRDRDRERDRGTSRVDDKP). Phosphoserine is present on residues Ser164 and Ser229. Phosphotyrosine is present on Tyr234. 4 positions are modified to phosphoserine: Ser238, Ser284, Ser305, and Ser325.

In terms of assembly, component of a PRC1-like complex. Interacts with RING1, RNF2, PCGF1, PCGF2, PCGF3, BMI1, PCGF5, PCGF6 and PHC2. Interacts with histone H3. Interacts with MLLT3. Interacts with PHC2. Interacts (via chromodomain) with single-stranded RNA.

The protein resides in the nucleus. The protein localises to the chromosome. Functionally, component of a Polycomb group (PcG) multiprotein PRC1-like complex, a complex class required to maintain the transcriptionally repressive state of many genes, including Hox genes, throughout development. PcG PRC1 complex acts via chromatin remodeling and modification of histones; it mediates monoubiquitination of histone H2A 'Lys-119', rendering chromatin heritably changed in its expressibility. The sequence is that of Chromobox protein homolog 8 (Cbx8) from Mus musculus (Mouse).